The following is a 489-amino-acid chain: mRNA cleavage and polyadenylation factor CLP1 (489 aa).

Residues Glu28 and 152–157 (YSGKTT) contribute to the ATP site.

It belongs to the Clp1 family. Clp1 subfamily. In terms of assembly, component of a pre-mRNA cleavage factor complex. Interacts directly with PCF11.

It localises to the nucleus. Functionally, required for endonucleolytic cleavage during polyadenylation-dependent pre-mRNA 3'-end formation. This is mRNA cleavage and polyadenylation factor CLP1 from Candida albicans (strain SC5314 / ATCC MYA-2876) (Yeast).